We begin with the raw amino-acid sequence, 320 residues long: Homoserine kinase (320 aa).

Proline 100–alanine 110 contacts ATP.

It belongs to the GHMP kinase family. Homoserine kinase subfamily.

Its subcellular location is the cytoplasm. The catalysed reaction is L-homoserine + ATP = O-phospho-L-homoserine + ADP + H(+). It functions in the pathway amino-acid biosynthesis; L-threonine biosynthesis; L-threonine from L-aspartate: step 4/5. In terms of biological role, catalyzes the ATP-dependent phosphorylation of L-homoserine to L-homoserine phosphate. The sequence is that of Homoserine kinase from Chlorobium phaeobacteroides (strain BS1).